A 180-amino-acid polypeptide reads, in one-letter code: Ferric nitrobindin-like protein (180 aa).

A GXWXGXG motif is present at residues 21–27 (GRWEGAG).

The protein belongs to the nitrobindin family.

The polypeptide is Ferric nitrobindin-like protein (Kineococcus radiotolerans (strain ATCC BAA-149 / DSM 14245 / SRS30216)).